The chain runs to 583 residues: Aspartate--tRNA ligase (583 aa).

L-aspartate is bound at residue Glu174. Positions 198–201 (QITK) are aspartate. Arg220 lines the L-aspartate pocket. ATP-binding positions include 220 to 222 (RDE) and Gln229. His443 lines the L-aspartate pocket. Residue Glu477 participates in ATP binding. Residue Arg484 coordinates L-aspartate. 529-532 (GLDR) lines the ATP pocket.

It belongs to the class-II aminoacyl-tRNA synthetase family. Type 1 subfamily. In terms of assembly, homodimer.

The protein resides in the cytoplasm. The enzyme catalyses tRNA(Asp) + L-aspartate + ATP = L-aspartyl-tRNA(Asp) + AMP + diphosphate. In terms of biological role, catalyzes the attachment of L-aspartate to tRNA(Asp) in a two-step reaction: L-aspartate is first activated by ATP to form Asp-AMP and then transferred to the acceptor end of tRNA(Asp). In Streptococcus thermophilus (strain CNRZ 1066), this protein is Aspartate--tRNA ligase.